Here is a 109-residue protein sequence, read N- to C-terminus: Small ribosomal subunit protein bS20 (109 aa).

Positions 1–26 (MANIKSAKKRAIQSEKRRKHNASRRS) are disordered.

Belongs to the bacterial ribosomal protein bS20 family.

In terms of biological role, binds directly to 16S ribosomal RNA. The polypeptide is Small ribosomal subunit protein bS20 (Hamiltonella defensa subsp. Acyrthosiphon pisum (strain 5AT)).